Consider the following 297-residue polypeptide: Cell division protein ZipA (297 aa).

Methionine 1 is a topological domain (periplasmic). A helical membrane pass occupies residues 2–22 (EIGLREWLILIGIIVIAGILF). Over 23–297 (DGWRRMRGGK…FERRALTQKR (275 aa)) the chain is Cytoplasmic. Positions 48–151 (DEEGGSAEVL…AAPASNSVKE (104 aa)) are disordered. Basic and acidic residues predominate over residues 83–92 (ARDREREPKP). A compositionally biased stretch (acidic residues) spans 124-133 (LFSDSDDDFA).

Belongs to the ZipA family. As to quaternary structure, interacts with FtsZ via their C-terminal domains.

It localises to the cell inner membrane. In terms of biological role, essential cell division protein that stabilizes the FtsZ protofilaments by cross-linking them and that serves as a cytoplasmic membrane anchor for the Z ring. Also required for the recruitment to the septal ring of downstream cell division proteins. In Pseudomonas putida (strain ATCC 47054 / DSM 6125 / CFBP 8728 / NCIMB 11950 / KT2440), this protein is Cell division protein ZipA.